Reading from the N-terminus, the 749-residue chain is MLETNKNHATAWQGFKNGRWNRHVDVREFIQLNYTLYEGNDSFLAGPTEATSKLWEQVMQLSKEERERGGMWDMDTKVASTITSHDAGYLDKDLETIVGVQTEKPFKRSMQPFGGIRMAKAACEAYGYELDEETEKIFTDYRKTHNQGVFDAYSREMLNCRKAGVITGLPDAYGRGRIIGDYRRVALYGVDFLMEEKMHDFNTMSTEMSEDVIRLREELSEQYRALKELKELGQKYGFDLSRPAENFKEAVQWLYLAYLAAIKEQNGAAMSLGRTSTFLDIYAERDLKAGVITESEVQEIIDHFIMKLRIVKFARTPDYNELFSGDPTWVTESIGGVGIDGRPLVTKNSFRFLHSLDNLGPAPEPNLTVLWSVRLPDNFKTYCAKMSIKTSSIQYENDDIMRESYGDDYGIACCVSAMTIGKQMQFFGARANLAKTLLYAINGGKDEKSGAQVGPNFEGINSEVLEYDEVFKKFDQMMDWLAGVYINSLNVIHYMHDKYSYERIEMALHDTEIVRTMATGIAGLSVAADSLSAIKYAQVKPIRNEEGLVVDFEIEGDFPKYGNNDDRVDDIAVDLVERFMTKLRSHKTYRDSEHTMSVLTITSNVVYGKKTGNTPDGRKAGEPFAPGANPMHGRDQKGALSSLSSVAKIPYDCCKDGISNTFSIVPKSLGKEPEDQNRNLTSMLDGYAMQCGHHLNINVFNRETLIDAMEHPEEYPQLTIRVSGYAVNFIKLTREQQLDVISRTFHESM.

A PFL domain is found at 3-619 (ETNKNHATAW…KTGNTPDGRK (617 aa)). The active-site S-acetylcysteine intermediate is the Cys413. Cys414 functions as the Cysteine radical intermediate in the catalytic mechanism. The Glycine radical domain occupies 626–749 (PGANPMHGRD…VISRTFHESM (124 aa)). Residue Gly724 is modified to Glycine radical.

The protein belongs to the glycyl radical enzyme (GRE) family. PFL subfamily. In terms of assembly, homodimer.

The protein resides in the cytoplasm. The enzyme catalyses formate + acetyl-CoA = pyruvate + CoA. Its pathway is fermentation; pyruvate fermentation; formate from pyruvate: step 1/1. In terms of biological role, catalyzes the conversion of pyruvate to formate and acetyl-CoA. The sequence is that of Formate acetyltransferase (pflB) from Staphylococcus aureus (strain USA300).